Consider the following 236-residue polypeptide: MTKKVWKFYGIALLAVVIDQVLKLWVYFNMQMGTLGQIKLLGNWFKLFYTLNPGMAFGIQFGFTYDKVLLTIIRIIATSMIIKYIWNLAKETNSSKWLLWGWSLILGGAAGNGIDSIFYGKILHNAPYGAPMSWFYGQVIDMLYIDLWSGRLPDWVPWYSGYYVTCLPVFNLADVAILAGVALIVLDKRASIQQPVQKYEATEVTDSELLETRHELVDPITEHNNTEHNHPEVEDK.

The next 4 membrane-spanning stretches (helical) occupy residues 8–28 (FYGI…WVYF), 44–64 (WFKL…FGFT), 68–88 (VLLT…IWNL), and 98–118 (LLWG…DSIF). Catalysis depends on residues aspartate 141 and aspartate 174. Residues 166–186 (CLPVFNLADVAILAGVALIVL) form a helical membrane-spanning segment.

Belongs to the peptidase A8 family.

The protein resides in the cell inner membrane. The enzyme catalyses Release of signal peptides from bacterial membrane prolipoproteins. Hydrolyzes -Xaa-Yaa-Zaa-|-(S,diacylglyceryl)Cys-, in which Xaa is hydrophobic (preferably Leu), and Yaa (Ala or Ser) and Zaa (Gly or Ala) have small, neutral side chains.. The protein operates within protein modification; lipoprotein biosynthesis (signal peptide cleavage). This protein specifically catalyzes the removal of signal peptides from prolipoproteins. The chain is Lipoprotein signal peptidase from Amoebophilus asiaticus (strain 5a2).